We begin with the raw amino-acid sequence, 927 residues long: Non-lysosomal glucosylceramidase (927 aa).

A disordered region spans residues 32–62 (EETGGTKDVQVTDCKSPEDSRPPKETDCCNP). Residues 46-58 (KSPEDSRPPKETD) are compositionally biased toward basic and acidic residues.

The protein belongs to the non-lysosomal glucosylceramidase family. In terms of tissue distribution, widely expressed. Mainly expressed in brain, heart, skeletal muscle, kidney and placenta and expressed at lower levels in liver, spleen, small intestine and lung. Detectable in colon, thymus and peripheral blood leukocytes.

It localises to the endoplasmic reticulum membrane. Its subcellular location is the golgi apparatus membrane. The enzyme catalyses a beta-D-glucosyl-(1&lt;-&gt;1')-N-acylsphing-4-enine + H2O = an N-acylsphing-4-enine + D-glucose. The catalysed reaction is a beta-D-galactosyl-(1&lt;-&gt;1')-N-acylsphing-4-enine + H2O = an N-acylsphing-4-enine + D-galactose. It catalyses the reaction beta-D-glucosyl-(1-&gt;3)-O-lithocholate + H2O = lithocholate + D-glucose. It carries out the reaction beta-D-glucosyl-(1-&gt;3)-O-chenodeoxycholate + H2O = chenodeoxycholate + D-glucose. The enzyme catalyses a di-trans,poly-cis-dolichyl beta-D-glucosyl phosphate + chenodeoxycholate = beta-D-glucosyl-(1-&gt;3)-O-chenodeoxycholate + a di-trans,poly-cis-dolichyl phosphate + H(+). The catalysed reaction is octyl beta-D-glucose + chenodeoxycholate = beta-D-glucosyl-(1-&gt;3)-O-chenodeoxycholate + octan-1-ol. It catalyses the reaction cholesteryl 3-beta-D-glucoside + H2O = cholesterol + D-glucose. It carries out the reaction a beta-D-glucosyl-(1&lt;-&gt;1')-N-acylsphing-4-enine + cholesterol = cholesteryl 3-beta-D-glucoside + an N-acylsphing-4-enine. The enzyme catalyses beta-D-glucosyl-N-(9Z-octadecenoyl)-sphing-4E-enine + cholesterol = N-(9Z-octadecenoyl)-sphing-4-enine + cholesteryl 3-beta-D-glucoside. The catalysed reaction is a beta-D-galactosyl-(1&lt;-&gt;1')-N-acylsphing-4-enine + cholesterol = cholesteryl 3-beta-D-galactoside + an N-acylsphing-4-enine. It catalyses the reaction 1-(beta-D-galactosyl)-N-dodecanoylsphing-4-enine + cholesterol = cholesteryl 3-beta-D-galactoside + N-dodecanoylsphing-4-enine. Its pathway is lipid metabolism; sphingolipid metabolism. It participates in steroid metabolism; cholesterol metabolism. Inhibited by AMP-DMN/N -((5-adamantane-1-yl-methoxy)pentyl)-deoxynojirimycin. Activated by Mn(2+), Co(2+) and Mg(2+) and inhibited by Zn(2+). Enzymatic activity is dependent on membrane association and requires the presence of lipids. The membrane-associated enzyme is not inhibited by condutiriol B epoxide and bromocondutiriol B epoxide. Non-lysosomal glucosylceramidase that catalyzes the hydrolysis of glucosylceramides/GlcCers (such as beta-D-glucosyl-(1&lt;-&gt;1')-N-acylsphing-4-enine) to free glucose and ceramides (such as N-acylsphing-4-enine). GlcCers are membrane glycosphingolipids that have a wide intracellular distribution. They are the main precursors of more complex glycosphingolipids that play a role in cellular growth, differentiation, adhesion, signaling, cytoskeletal dynamics and membrane properties. Involved in the transglucosylation of cholesterol, transfers glucose from GlcCer to cholesterol, thereby modifying its water solubility and biological properties. Under specific conditions, may catalyze the reverse reaction, transferring glucose from cholesteryl-3-beta-D-glucoside to ceramide (such as N-acylsphing-4-enine). May play a role in the metabolism of bile acids. Able to hydrolyze bile acid 3-O-glucosides as well as to produce bile acid-glucose conjugates thanks to a bile acid glucosyl transferase activity. Catalyzes the hydrolysis of galactosylceramides/GalCers (such as beta-D-galactosyl-(1&lt;-&gt;1')-N-acylsphing-4-enine), as well as the galactosyl transfer between GalCers and cholesterol in vitro with lower activity compared with their activity against GlcCers. The protein is Non-lysosomal glucosylceramidase of Homo sapiens (Human).